The chain runs to 208 residues: ATP-dependent dethiobiotin synthetase BioD (208 aa).

11 to 16 (EVGKTF) serves as a coordination point for ATP. Residue Thr15 participates in Mg(2+) binding. Residue Lys31 is part of the active site. Ser35 contributes to the substrate binding site. ATP contacts are provided by residues Asp42, 95-98 (ETSG), and 155-156 (NQ). Residues Asp42 and Glu95 each contribute to the Mg(2+) site.

The protein belongs to the dethiobiotin synthetase family. As to quaternary structure, homodimer. Mg(2+) serves as cofactor.

The protein localises to the cytoplasm. The catalysed reaction is (7R,8S)-7,8-diammoniononanoate + CO2 + ATP = (4R,5S)-dethiobiotin + ADP + phosphate + 3 H(+). The protein operates within cofactor biosynthesis; biotin biosynthesis; biotin from 7,8-diaminononanoate: step 1/2. Functionally, catalyzes a mechanistically unusual reaction, the ATP-dependent insertion of CO2 between the N7 and N8 nitrogen atoms of 7,8-diaminopelargonic acid (DAPA, also called 7,8-diammoniononanoate) to form a ureido ring. This is ATP-dependent dethiobiotin synthetase BioD from Chlamydia felis (strain Fe/C-56) (Chlamydophila felis).